The primary structure comprises 761 residues: Xaa-Pro dipeptidyl-peptidase (761 aa).

Active-site charge relay system residues include Ser347, Asp467, and His497.

The protein belongs to the peptidase S15 family. As to quaternary structure, homodimer.

It is found in the cytoplasm. The enzyme catalyses Hydrolyzes Xaa-Pro-|- bonds to release unblocked, N-terminal dipeptides from substrates including Ala-Pro-|-p-nitroanilide and (sequentially) Tyr-Pro-|-Phe-Pro-|-Gly-Pro-|-Ile.. Removes N-terminal dipeptides sequentially from polypeptides having unsubstituted N-termini provided that the penultimate residue is proline. The sequence is that of Xaa-Pro dipeptidyl-peptidase from Streptococcus agalactiae serotype V (strain ATCC BAA-611 / 2603 V/R).